A 674-amino-acid chain; its full sequence is DNA ligase (674 aa).

Residues 34–38 (DADFD), 82–83 (SL), and E107 each bind NAD(+). K109 functions as the N6-AMP-lysine intermediate in the catalytic mechanism. Residues R130, E170, K286, and K310 each coordinate NAD(+). Residues C404, C407, C423, and C429 each coordinate Zn(2+). Residues 593-674 (KPAQTLEGIT…FTRLLETGEA (82 aa)) enclose the BRCT domain.

This sequence belongs to the NAD-dependent DNA ligase family. LigA subfamily. Mg(2+) is required as a cofactor. Requires Mn(2+) as cofactor.

It catalyses the reaction NAD(+) + (deoxyribonucleotide)n-3'-hydroxyl + 5'-phospho-(deoxyribonucleotide)m = (deoxyribonucleotide)n+m + AMP + beta-nicotinamide D-nucleotide.. In terms of biological role, DNA ligase that catalyzes the formation of phosphodiester linkages between 5'-phosphoryl and 3'-hydroxyl groups in double-stranded DNA using NAD as a coenzyme and as the energy source for the reaction. It is essential for DNA replication and repair of damaged DNA. In Corynebacterium aurimucosum (strain ATCC 700975 / DSM 44827 / CIP 107346 / CN-1) (Corynebacterium nigricans), this protein is DNA ligase.